Here is a 107-residue protein sequence, read N- to C-terminus: uncharacterized protein (107 aa).

This is an uncharacterized protein from Acidianus convivator (ABV).